The following is a 61-amino-acid chain: Double gene block protein 2 (61 aa).

The Cytoplasmic segment spans residues methionine 1–aspartate 12. A helical; Signal-anchor for type II membrane protein membrane pass occupies residues tyrosine 13–serine 33. The Lumenal segment spans residues proline 34 to glycine 61.

This sequence belongs to the gammacarmovirus double gene block protein 2 family.

Its subcellular location is the host endoplasmic reticulum membrane. In terms of biological role, cell-to-cell movement function. This Melon necrotic spot virus (MNSV) protein is Double gene block protein 2.